The following is a 281-amino-acid chain: Probable superoxide dismutase [Fe] (281 aa).

Fe cation contacts are provided by His104, His152, Asp236, and His240.

It belongs to the iron/manganese superoxide dismutase family. The cofactor is Fe cation.

It carries out the reaction 2 superoxide + 2 H(+) = H2O2 + O2. In terms of biological role, destroys superoxide anion radicals which are normally produced within the cells and which are toxic to biological systems. The protein is Probable superoxide dismutase [Fe] (sodF) of Bacillus subtilis (strain 168).